Here is a 201-residue protein sequence, read N- to C-terminus: Thymidylate kinase (201 aa).

G7–S14 is an ATP binding site.

It belongs to the thymidylate kinase family.

It carries out the reaction dTMP + ATP = dTDP + ADP. Phosphorylation of dTMP to form dTDP in both de novo and salvage pathways of dTTP synthesis. This Thermosipho africanus (strain TCF52B) protein is Thymidylate kinase.